We begin with the raw amino-acid sequence, 305 residues long: Aquaporin-1 (305 aa).

Residues 1 to 34 form a disordered region; that stretch reads MSSNDSNDTDKQHTRLDPTGVDDAYIPPEQPETK. At 1-48 the chain is on the cytoplasmic side; the sequence is MSSNDSNDTDKQHTRLDPTGVDDAYIPPEQPETKHHRFKISKDTLRNH. The chain crosses the membrane as a helical span at residues 49–69; the sequence is FIAAAGEFCGTFMFLWCAYVI. Residues 70 to 91 lie on the Extracellular side of the membrane; the sequence is CNVANHDVALVAAPDGSHPGQL. The helical transmembrane segment at 92 to 112 threads the bilayer; sequence IMIAIGFGFSVMFSIWCFAGV. Over 113–136 the chain is Cytoplasmic; the sequence is SGGALNPAMSLSLCLARAVSPTRC. The NPA 1 motif lies at 118–120; the sequence is NPA. The helical transmembrane segment at 137-157 threads the bilayer; sequence VVMWVSQIVAGMAAGGAASAM. Over 158–176 the chain is Extracellular; sequence TPGEVLFANSLGLGCSRTR. The chain crosses the membrane as a helical span at residues 177 to 197; it reads GLFLEMFGTAILCLTVLMTAV. The Cytoplasmic segment spans residues 198–203; it reads EKRETN. Residues 204–224 traverse the membrane as a helical segment; sequence FMAALPIGISLFIAHVALTAY. The Extracellular portion of the chain corresponds to 225-248; sequence TGTGVNPARSLGAAVAARYFPHYH. The NPA 2 signature appears at 230–232; it reads NPA. The chain crosses the membrane as a helical span at residues 249–269; sequence WIYWIGTLLGSILAWSVWQLL. The Cytoplasmic segment spans residues 270–305; it reads QILDYTTYVTAEKAASTKEKAQKKGETSSSSAVAEV. Residues 286–295 show a composition bias toward basic and acidic residues; it reads TKEKAQKKGE. Positions 286–305 are disordered; that stretch reads TKEKAQKKGETSSSSAVAEV. Residues 296–305 show a composition bias toward polar residues; it reads TSSSSAVAEV.

Belongs to the MIP/aquaporin (TC 1.A.8) family.

Its subcellular location is the endoplasmic reticulum membrane. It localises to the cell membrane. Its function is as follows. Water channel required to facilitate the transport of water across membranes. Involved in sporulation, freeze tolerance and osmotolerance. Is non-functional in most laboratory strains. The polypeptide is Aquaporin-1 (AQY1) (Saccharomyces cerevisiae (strain YJM789) (Baker's yeast)).